Here is a 252-residue protein sequence, read N- to C-terminus: Insulin-induced gene 1 protein (252 aa).

Residues 1-59 are Cytoplasmic-facing; it reads MPRLESGAWSCSCAARARHAARPGEAAPKADAMQSPSPSAGRAEREASGGSATTWRQHL. A disordered region spans residues 22–48; sequence RPGEAAPKADAMQSPSPSAGRAEREAS. Residues 60-82 traverse the membrane as a helical segment; that stretch reads VQRSVVLFVVGAFMALVLNLLQI. Residues 83-101 are Extracellular-facing; it reads QRNVTLFPDEVIATLFSSA. A helical membrane pass occupies residues 102–119; sequence WWVPPCCGTAAAVVGLLY. The Cytoplasmic segment spans residues 120–134; the sequence is PCIDSHLGEPHKFKR. Residues 135 to 157 traverse the membrane as a helical segment; the sequence is EWASVMRCIAVFVGINHASAKLD. The Extracellular segment spans residues 158–160; the sequence is FAN. Residues 161-179 traverse the membrane as a helical segment; the sequence is NVQLSLTLAALSLGLWWTF. Topologically, residues 180 to 184 are cytoplasmic; sequence DRSRS. Residues 185–206 traverse the membrane as a helical segment; the sequence is GLGLGITIAFVATLITQFLVYN. Over 207–220 the chain is Extracellular; it reads GVYQYTSPDFLYIR. A helical transmembrane segment spans residues 221–238; it reads SWLPCIFFSGGVTVGNIG. At 239-252 the chain is on the cytoplasmic side; that stretch reads RQLAMGIPEKPHND. Residues 246–252 carry the KxHxx motif; it reads PEKPHND.

The protein belongs to the INSIG family. As to quaternary structure, interacts with SCAP; interaction is direct and only takes place in the presence of sterols; it prevents interaction between SCAP and the coat protein complex II (COPII). Associates with the SCAP-SREBP complex; association is mediated via its interaction with SCAP and only takes place in the presence of sterols.

The protein resides in the endoplasmic reticulum membrane. Its function is as follows. Oxysterol-binding protein that mediates feedback control of cholesterol synthesis by controlling both endoplasmic reticulum to Golgi transport of SCAP and degradation of HMGCR. Acts as a negative regulator of cholesterol biosynthesis by mediating the retention of the SCAP-SREBP complex in the endoplasmic reticulum, thereby blocking the processing of sterol regulatory element-binding proteins (SREBPs). Binds oxysterol, including 25-hydroxycholesterol, regulating interaction with SCAP and retention of the SCAP-SREBP complex in the endoplasmic reticulum. In presence of oxysterol, interacts with SCAP, retaining the SCAP-SREBP complex in the endoplasmic reticulum, thereby preventing SCAP from escorting SREBPs to the Golgi. Sterol deprivation reduces oxysterol-binding, disrupting the interaction between INSIG1 and SCAP, thereby promoting Golgi transport of the SCAP-SREBP complex, followed by processing and nuclear translocation of SREBPs. Also regulates cholesterol synthesis by regulating degradation of HMGCR. This is Insulin-induced gene 1 protein from Gallus gallus (Chicken).